A 242-amino-acid polypeptide reads, in one-letter code: Octanoyltransferase (242 aa).

The BPL/LPL catalytic domain occupies 31 to 206; the sequence is SQTTDEIWFL…LFLKNFGYNQ (176 aa). Substrate-binding positions include 70 to 77, 137 to 139, and 150 to 152; these read RGGQVTYH, SIG, and GLA. The Acyl-thioester intermediate role is filled by Cys168.

The protein belongs to the LipB family.

It is found in the cytoplasm. It carries out the reaction octanoyl-[ACP] + L-lysyl-[protein] = N(6)-octanoyl-L-lysyl-[protein] + holo-[ACP] + H(+). Its pathway is protein modification; protein lipoylation via endogenous pathway; protein N(6)-(lipoyl)lysine from octanoyl-[acyl-carrier-protein]: step 1/2. In terms of biological role, catalyzes the transfer of endogenously produced octanoic acid from octanoyl-acyl-carrier-protein onto the lipoyl domains of lipoate-dependent enzymes. Lipoyl-ACP can also act as a substrate although octanoyl-ACP is likely to be the physiological substrate. The sequence is that of Octanoyltransferase from Coxiella burnetii (strain CbuK_Q154) (Coxiella burnetii (strain Q154)).